The primary structure comprises 95 residues: Acylphosphatase (95 aa).

Residues 5–93 (RAHLYIKGKV…GEFQDFRILP (89 aa)) form the Acylphosphatase-like domain. Residues Arg20 and Asn38 contribute to the active site.

It belongs to the acylphosphatase family.

The enzyme catalyses an acyl phosphate + H2O = a carboxylate + phosphate + H(+). The chain is Acylphosphatase (acyP) from Pyrobaculum islandicum (strain DSM 4184 / JCM 9189 / GEO3).